A 264-amino-acid polypeptide reads, in one-letter code: ATP synthase subunit a (264 aa).

6 helical membrane-spanning segments follow: residues 29-49 (TWHIDSLFFSVGLGVLFLWLF), 89-109 (VIAPLALTIFVWVFMMNFMDM), 134-154 (DLNITFSMAIGVFLLIIYYSI), 177-197 (IPVNLLLETVTLIAKPISLAL), 208-228 (LIFILIALMYGANWALSTLGV), and 235-255 (LIFHILVITLQAFIFMMLTIV).

It belongs to the ATPase A chain family. In terms of assembly, F-type ATPases have 2 components, CF(1) - the catalytic core - and CF(0) - the membrane proton channel. CF(1) has five subunits: alpha(3), beta(3), gamma(1), delta(1), epsilon(1). CF(0) has three main subunits: a(1), b(2) and c(9-12). The alpha and beta chains form an alternating ring which encloses part of the gamma chain. CF(1) is attached to CF(0) by a central stalk formed by the gamma and epsilon chains, while a peripheral stalk is formed by the delta and b chains.

The protein resides in the cell inner membrane. Functionally, key component of the proton channel; it plays a direct role in the translocation of protons across the membrane. The chain is ATP synthase subunit a from Shewanella woodyi (strain ATCC 51908 / MS32).